A 117-amino-acid polypeptide reads, in one-letter code: Protein Wnt-6 (117 aa).

Residue Ser1 is the site of O-palmitoleoyl serine; by PORCN attachment. The cysteines at positions 83 and 98 are disulfide-linked. N-linked (GlcNAc...) asparagine glycosylation is present at Asn84.

It belongs to the Wnt family. Post-translationally, palmitoleoylation is required for efficient binding to frizzled receptors. Depalmitoleoylation leads to Wnt signaling pathway inhibition.

It localises to the secreted. Its subcellular location is the extracellular space. It is found in the extracellular matrix. Functionally, ligand for members of the frizzled family of seven transmembrane receptors. Probable developmental protein. May be a signaling molecule which affects the development of discrete regions of tissues. Is likely to signal over only few cell diameters. This is Protein Wnt-6 (WNT-6) from Evasterias troschelii (Mottled sea star).